The following is a 204-amino-acid chain: Probable dTDP-4-oxo-2,6-dideoxy-D-glucose 3,5-epimerase (204 aa).

Residues Arg21, Glu26, 45-47 (QAN), Lys70, and His117 contribute to the substrate site. The Proton donor role is filled by Tyr130. Glu141 is a substrate binding site. The tract at residues 164–204 (VGEGTPTHRPWRRPRRPGILPDYEGVPGALHRGGGRRGTGP) is disordered.

This sequence belongs to the dTDP-4-dehydrorhamnose 3,5-epimerase family.

It participates in antibiotic biosynthesis. In terms of biological role, involved in the biosynthesis of one of the two 2,6-deoxysugars, dTDP-L-oleandrose, attached to the macrolactone ring oleandolide to produce the aglycone antibiotic oleandomycin. Probably catalyzes the conversion of dTDP-4-keto-2,6-dideoxy-alpha-D-glucose to dTDP-4-keto-2,6-dideoxy-beta-L-galactose. The protein is Probable dTDP-4-oxo-2,6-dideoxy-D-glucose 3,5-epimerase of Streptomyces antibioticus.